The following is a 521-amino-acid chain: Bifunctional purine biosynthesis protein PurH (521 aa).

The MGS-like domain occupies 1 to 145 (MIKQALISVS…KNHRDVTVVV (145 aa)).

The protein belongs to the PurH family.

It carries out the reaction (6R)-10-formyltetrahydrofolate + 5-amino-1-(5-phospho-beta-D-ribosyl)imidazole-4-carboxamide = 5-formamido-1-(5-phospho-D-ribosyl)imidazole-4-carboxamide + (6S)-5,6,7,8-tetrahydrofolate. The catalysed reaction is IMP + H2O = 5-formamido-1-(5-phospho-D-ribosyl)imidazole-4-carboxamide. The protein operates within purine metabolism; IMP biosynthesis via de novo pathway; 5-formamido-1-(5-phospho-D-ribosyl)imidazole-4-carboxamide from 5-amino-1-(5-phospho-D-ribosyl)imidazole-4-carboxamide (10-formyl THF route): step 1/1. It participates in purine metabolism; IMP biosynthesis via de novo pathway; IMP from 5-formamido-1-(5-phospho-D-ribosyl)imidazole-4-carboxamide: step 1/1. This Burkholderia lata (strain ATCC 17760 / DSM 23089 / LMG 22485 / NCIMB 9086 / R18194 / 383) protein is Bifunctional purine biosynthesis protein PurH.